Here is a 152-residue protein sequence, read N- to C-terminus: Probable methionine-R-sulfoxide reductase B (152 aa).

The MsrB domain occupies 27–151; it reads QTEWKSVLPN…NSVCMAFEKK (125 aa). Zn(2+)-binding residues include Cys66, Cys69, Cys116, and Cys119. The active-site Nucleophile is the Cys140.

It belongs to the MsrB Met sulfoxide reductase family. The cofactor is Zn(2+).

It carries out the reaction L-methionyl-[protein] + [thioredoxin]-disulfide + H2O = L-methionyl-(R)-S-oxide-[protein] + [thioredoxin]-dithiol. Methionine-sulfoxide reductase that specifically reduces methionine (R)-sulfoxide back to methionine. While in many cases, methionine oxidation is the result of random oxidation following oxidative stress, methionine oxidation is also a post-translational modification that takes place on specific residue. This chain is Probable methionine-R-sulfoxide reductase B, found in Caenorhabditis elegans.